A 111-amino-acid chain; its full sequence is Probable U2 small nuclear ribonucleoprotein B'' (111 aa).

Residues 4-83 form the RRM domain; it reads NTLYVNNLND…KEMKIQYAHS (80 aa).

As to quaternary structure, belongs to the 40S cdc5-associated complex (or cwf complex), a spliceosome sub-complex reminiscent of a late-stage spliceosome composed of the U2, U5 and U6 snRNAs and at least brr2, cdc5, cwf2/prp3, cwf3/syf1, cwf4/syf3, cwf5/ecm2, spp42/cwf6, cwf7/spf27, cwf8, cwf9, cwf10, cwf11, cwf12, prp45/cwf13, cwf14, cwf15, cwf16, cwf17, cwf18, cwf19, cwf20, cwf21, cwf22, cwf23, cwf24, cwf25, cwf26, cyp7/cwf27, cwf28, cwf29/ist3, lea1, msl1, prp5/cwf1, prp10, prp12/sap130, prp17, prp22, sap61, sap62, sap114, sap145, slu7, smb1, smd1, smd3, smf1, smg1 and syf2.

Its subcellular location is the nucleus. Involved in pre-mRNA splicing. This protein is associated with snRNP U2. It binds stem loop IV of U2 snRNA. In Schizosaccharomyces pombe (strain 972 / ATCC 24843) (Fission yeast), this protein is Probable U2 small nuclear ribonucleoprotein B'' (msl1).